The chain runs to 85 residues: RNA-binding protein Hfq (85 aa).

Positions 11-71 (DTFLNHVRKS…ISTIMPGHPV (61 aa)) constitute a Sm domain.

Belongs to the Hfq family. In terms of assembly, homohexamer.

Functionally, RNA chaperone that binds small regulatory RNA (sRNAs) and mRNAs to facilitate mRNA translational regulation in response to envelope stress, environmental stress and changes in metabolite concentrations. Also binds with high specificity to tRNAs. Seems to be involved in the regulation of NifA. This is RNA-binding protein Hfq from Azorhizobium caulinodans (strain ATCC 43989 / DSM 5975 / JCM 20966 / LMG 6465 / NBRC 14845 / NCIMB 13405 / ORS 571).